The following is a 251-amino-acid chain: uncharacterized protein (251 aa).

Residues 1–22 (MTQLPELGLRSPNNKSPTGPHP) are disordered.

This is an uncharacterized protein from Homo sapiens (Human).